The sequence spans 2242 residues: Large tegument protein deneddylase (2242 aa).

Residues 1–238 are deubiquitination activity; the sequence is MKVTQASCHQ…IDLTGVVRES (238 aa). One can recognise a Peptidase C76 domain in the interval 4-226; that stretch reads TQASCHQGDI…AARLVSTYRD (223 aa). Residues Cys-24, Asp-160, and His-162 contribute to the active site. The interval 239-318 is disordered; it reads ADTAATTTTA…KTLATASSSS (80 aa). Residues 240-250 show a composition bias toward low complexity; the sequence is DTAATTTTAAP. The segment covering 251–268 has biased composition (pro residues); that stretch reads SLPPLPDPIVDPGCPPGV. Positions 304–318 are enriched in low complexity; that stretch reads PSTTSKTLATASSSS. The interaction with inner tegument protein stretch occupies residues 328–332; it reads SSAVP. Positions 1173 to 1190 are enriched in polar residues; sequence SQQKMEGQLQETRQQMTE. Residues 1173–1229 form a disordered region; the sequence is SQQKMEGQLQETRQQMTETSERLDRSLRQDPGSSSVTRVPEKPFKGQELAGRITPPP. Residues 1191 to 1200 show a composition bias toward basic and acidic residues; that stretch reads TSERLDRSLR.

Belongs to the herpesviridae large tegument protein family. As to quaternary structure, interacts with host CUL1 and CUL4A; these interactions inhibit the E3 ligase activity of cullins. Interacts with inner tegument protein. Interacts with capsid vertex specific component CVC2. Interacts with the major capsid protein/MCP.

Its subcellular location is the virion tegument. It is found in the host cytoplasm. It localises to the host nucleus. The enzyme catalyses Thiol-dependent hydrolysis of ester, thioester, amide, peptide and isopeptide bonds formed by the C-terminal Gly of ubiquitin (a 76-residue protein attached to proteins as an intracellular targeting signal).. Its function is as follows. Large tegument protein that plays multiple roles in the viral cycle. During viral entry, remains associated with the capsid while most of the tegument is detached and participates in the capsid transport toward the host nucleus. Plays a role in the routing of the capsid at the nuclear pore complex and subsequent uncoating. Within the host nucleus, acts as a deneddylase and promotes the degradation of nuclear CRLs (cullin-RING ubiquitin ligases) and thereby stabilizes nuclear CRL substrates, while cytoplasmic CRLs remain unaffected. These modifications prevent host cell cycle S-phase progression and create a favorable environment allowing efficient viral genome replication. Participates later in the secondary envelopment of capsids. Indeed, plays a linker role for the association of the outer viral tegument to the capsids together with the inner tegument protein. The chain is Large tegument protein deneddylase from Homo sapiens (Human).